The chain runs to 465 residues: ATP-dependent protease ATPase subunit HslU (465 aa).

Residues Val-19 and 61–66 (GVGKTE) each bind ATP. Residues 153-175 (LFQSDGSDGDDETTEQDSHDEIR) form a disordered region. ATP contacts are provided by Asp-279, Glu-343, and Arg-415.

The protein belongs to the ClpX chaperone family. HslU subfamily. In terms of assembly, a double ring-shaped homohexamer of HslV is capped on each side by a ring-shaped HslU homohexamer. The assembly of the HslU/HslV complex is dependent on binding of ATP.

The protein resides in the cytoplasm. Functionally, ATPase subunit of a proteasome-like degradation complex; this subunit has chaperone activity. The binding of ATP and its subsequent hydrolysis by HslU are essential for unfolding of protein substrates subsequently hydrolyzed by HslV. HslU recognizes the N-terminal part of its protein substrates and unfolds these before they are guided to HslV for hydrolysis. This chain is ATP-dependent protease ATPase subunit HslU, found in Oceanobacillus iheyensis (strain DSM 14371 / CIP 107618 / JCM 11309 / KCTC 3954 / HTE831).